Consider the following 223-residue polypeptide: Glycosylphosphatidylinositol anchor biosynthesis protein 11 (223 aa).

6 helical membrane-spanning segments follow: residues leucine 25–isoleucine 45, valine 52–leucine 72, methionine 88–phenylalanine 108, phenylalanine 120–leucine 140, valine 158–tyrosine 178, and isoleucine 189–leucine 209.

Belongs to the PIGF family.

It is found in the endoplasmic reticulum membrane. Its pathway is glycolipid biosynthesis; glycosylphosphatidylinositol-anchor biosynthesis. Functionally, acts in the GPI biosynthetic pathway between GlcNAc-PI synthesis and GPI transfer to protein. The polypeptide is Glycosylphosphatidylinositol anchor biosynthesis protein 11 (GPI11) (Yarrowia lipolytica (strain CLIB 122 / E 150) (Yeast)).